The chain runs to 520 residues: UDP-N-acetylmuramoyl-L-alanyl-D-glutamate--2,6-diaminopimelate ligase (520 aa).

Leu48 provides a ligand contact to UDP-N-acetyl-alpha-D-muramoyl-L-alanyl-D-glutamate. 134 to 140 (GTSGKTT) contributes to the ATP binding site. Residues 176–177 (TT), Ser203, and Arg211 each bind UDP-N-acetyl-alpha-D-muramoyl-L-alanyl-D-glutamate. At Lys243 the chain carries N6-carboxylysine. Meso-2,6-diaminopimelate-binding positions include Arg405, 429 to 432 (DNPR), Gly483, and Glu487. The Meso-diaminopimelate recognition motif motif lies at 429-432 (DNPR).

Belongs to the MurCDEF family. MurE subfamily. Mg(2+) is required as a cofactor. In terms of processing, carboxylation is probably crucial for Mg(2+) binding and, consequently, for the gamma-phosphate positioning of ATP.

It is found in the cytoplasm. It carries out the reaction UDP-N-acetyl-alpha-D-muramoyl-L-alanyl-D-glutamate + meso-2,6-diaminopimelate + ATP = UDP-N-acetyl-alpha-D-muramoyl-L-alanyl-gamma-D-glutamyl-meso-2,6-diaminopimelate + ADP + phosphate + H(+). Its pathway is cell wall biogenesis; peptidoglycan biosynthesis. Functionally, catalyzes the addition of meso-diaminopimelic acid to the nucleotide precursor UDP-N-acetylmuramoyl-L-alanyl-D-glutamate (UMAG) in the biosynthesis of bacterial cell-wall peptidoglycan. The polypeptide is UDP-N-acetylmuramoyl-L-alanyl-D-glutamate--2,6-diaminopimelate ligase (Mycolicibacterium paratuberculosis (strain ATCC BAA-968 / K-10) (Mycobacterium paratuberculosis)).